We begin with the raw amino-acid sequence, 210 residues long: 2-dehydro-3-deoxy-phosphogluconate aldolase (210 aa).

Residue Glu41 is the Proton acceptor of the active site. Pyruvate is bound by residues Arg45, Thr69, and Lys129. Residue Lys129 is the Schiff-base intermediate with substrate of the active site.

It belongs to the KHG/KDPG aldolase family. Homotrimer.

The protein localises to the cytoplasm. The catalysed reaction is 2-dehydro-3-deoxy-6-phospho-D-gluconate = D-glyceraldehyde 3-phosphate + pyruvate. Its pathway is carbohydrate acid metabolism; 2-dehydro-3-deoxy-D-gluconate degradation; D-glyceraldehyde 3-phosphate and pyruvate from 2-dehydro-3-deoxy-D-gluconate: step 2/2. Catalyzes the reversible, stereospecific retro-aldol cleavage of 2-keto-3-deoxy-6-phosphogluconate (KDPG) to pyruvate and D-glyceraldehyde-3-phosphate. The sequence is that of 2-dehydro-3-deoxy-phosphogluconate aldolase (eda) from Treponema pallidum (strain Nichols).